The following is a 106-amino-acid chain: UPF0145 protein Csac_0771 (106 aa).

The protein belongs to the UPF0145 family.

The chain is UPF0145 protein Csac_0771 from Caldicellulosiruptor saccharolyticus (strain ATCC 43494 / DSM 8903 / Tp8T 6331).